A 443-amino-acid chain; its full sequence is ATP-dependent protease ATPase subunit HslU (443 aa).

ATP contacts are provided by residues I18, 60-65 (GVGKTE), D256, E321, and R393.

The protein belongs to the ClpX chaperone family. HslU subfamily. In terms of assembly, a double ring-shaped homohexamer of HslV is capped on each side by a ring-shaped HslU homohexamer. The assembly of the HslU/HslV complex is dependent on binding of ATP.

The protein resides in the cytoplasm. In terms of biological role, ATPase subunit of a proteasome-like degradation complex; this subunit has chaperone activity. The binding of ATP and its subsequent hydrolysis by HslU are essential for unfolding of protein substrates subsequently hydrolyzed by HslV. HslU recognizes the N-terminal part of its protein substrates and unfolds these before they are guided to HslV for hydrolysis. The protein is ATP-dependent protease ATPase subunit HslU of Pasteurella multocida (strain Pm70).